The sequence spans 225 residues: Putative adhesin RT0816 (225 aa).

Residues methionine 1–alanine 22 form the signal peptide.

The protein is Putative adhesin RT0816 of Rickettsia typhi (strain ATCC VR-144 / Wilmington).